The primary structure comprises 551 residues: MVAHAEIKNLSFVYADENEKALQHISLSVQKGEFIALAGGSGSGKTTLLKHFKKELLPIGKRTGDTYYDGTLLENVPDLLSAQEIGMVFQNPENQLVMDTVIQELAFSLENIGLPSHIIQKRIAELISFLGFQDLLHQSVHTLSGGQKQLVNLAAVLVMQPKLLLLDEPTAQLDPIAAKEFLGLLKRINEELGITIVLSEHRLDEVIPLATRVICMNNGRIVYDGSPKTVVANMWEVEKFRPFIPQIPRLFLEWNAKDIPFTVREAQMKLNDFLAISYVSEPIVQSEKQEVILSAEHISFQYEKNNPLILRDLTVSIEKGKWVALVGKNGTGKSTLLTILAGLQKARRGKVKWNGKVIHKIDSKERFKSIGYVSQHPYYHFTFDTVWDEVYERARELYGEQGKEIAEHQLKKFWLYGLKERHPHDCSGGEQQLLALCTTLLSKPTLLLLDEPTKGLDPWKKERVGELFRKLQKEGTTIVMATHDIEFAAKYVDQCMMLFDGAVIMNDAPKEFFSGNFFYTTSINRFIRKELPYALTWEDVYEACQNDMLHS.

ABC transporter domains are found at residues 5–243 (AEIK…FRPF) and 293–525 (LSAE…SINR). ATP-binding positions include 39–46 (GGSGSGKT) and 327–334 (GKNGTGKS).

This sequence belongs to the ABC transporter superfamily.

It is found in the cell membrane. Functionally, probably part of an ABC transporter complex. Responsible for energy coupling to the transport system. The sequence is that of Putative ABC transporter ATP-binding protein BA_3364/GBAA_3364/BAS3118 from Bacillus anthracis.